A 166-amino-acid chain; its full sequence is Endoribonuclease YbeY (166 aa).

Zn(2+)-binding residues include His-132, His-136, and His-142.

The protein belongs to the endoribonuclease YbeY family. It depends on Zn(2+) as a cofactor.

The protein resides in the cytoplasm. Functionally, single strand-specific metallo-endoribonuclease involved in late-stage 70S ribosome quality control and in maturation of the 3' terminus of the 16S rRNA. The protein is Endoribonuclease YbeY of Clostridium botulinum (strain Eklund 17B / Type B).